The primary structure comprises 63 residues: Large ribosomal subunit protein uL30 (63 aa).

This sequence belongs to the universal ribosomal protein uL30 family. As to quaternary structure, part of the 50S ribosomal subunit.

This is Large ribosomal subunit protein uL30 from Geobacillus stearothermophilus (Bacillus stearothermophilus).